Reading from the N-terminus, the 128-residue chain is Azurin (128 aa).

The Plastocyanin-like domain occupies 1–128 (AECKVTVDST…SMMKGTVTLK (128 aa)). Cys-3 and Cys-26 are disulfide-bonded. Cu cation is bound by residues His-46, Cys-112, His-117, and Met-121.

The protein localises to the periplasm. Its function is as follows. Transfers electrons from cytochrome c551 to cytochrome oxidase. This chain is Azurin, found in Pseudomonas putida (Arthrobacter siderocapsulatus).